The chain runs to 73 residues: MPDSAQPLSERLDALEIRIAYQDETIETLNATITAQWQQIDALTRQIKAFHDRLQQAESNAPAAPANERPPHY.

Residues 54 to 73 (LQQAESNAPAAPANERPPHY) are disordered. Over residues 57–67 (AESNAPAAPAN) the composition is skewed to low complexity.

This sequence belongs to the SlyX family.

The protein is Protein SlyX homolog of Rhodopseudomonas palustris (strain BisA53).